A 109-amino-acid polypeptide reads, in one-letter code: U4-lycotoxin-Ls1b (109 aa).

Positions Met-1–Ala-22 are cleaved as a signal peptide. Positions Ile-23–Arg-44 are excised as a propeptide. The tract at residues Ala-45 to Cys-88 is knottin domain. 4 cysteine pairs are disulfide-bonded: Cys-48/Cys-63, Cys-55/Cys-72, Cys-62/Cys-88, and Cys-74/Cys-86. Residues Gln-89 to Val-108 are linear cationic cytotoxin domain.

The protein belongs to the neurotoxin 19 (CSTX) family. 05 (U4-Lctx) subfamily. In terms of tissue distribution, expressed by the venom gland.

It localises to the secreted. In terms of biological role, enhances the high-affinity desensitization of human P2RX3 purinoceptors. The protein is U4-lycotoxin-Ls1b of Lycosa singoriensis (Wolf spider).